A 436-amino-acid polypeptide reads, in one-letter code: Probable glucose-6-phosphate isomerase (436 aa).

Residue Glu272 is the Proton donor of the active site. Residues His293 and Lys404 contribute to the active site.

It belongs to the GPI family.

The protein resides in the cytoplasm. It carries out the reaction alpha-D-glucose 6-phosphate = beta-D-fructose 6-phosphate. Its pathway is carbohydrate biosynthesis; gluconeogenesis. The protein operates within carbohydrate degradation; glycolysis; D-glyceraldehyde 3-phosphate and glycerone phosphate from D-glucose: step 2/4. Its function is as follows. Catalyzes the reversible isomerization of glucose-6-phosphate to fructose-6-phosphate. In Haloarcula marismortui (strain ATCC 43049 / DSM 3752 / JCM 8966 / VKM B-1809) (Halobacterium marismortui), this protein is Probable glucose-6-phosphate isomerase.